The following is a 160-amino-acid chain: Nucleotide-binding protein CBU_0114 (160 aa).

Belongs to the YajQ family.

Nucleotide-binding protein. The polypeptide is Nucleotide-binding protein CBU_0114 (Coxiella burnetii (strain RSA 493 / Nine Mile phase I)).